Reading from the N-terminus, the 210-residue chain is MGQVFLLMPVLLVSCFLSQGAAMENQRLFNIAVNRVQHLHLMAQKMFNDFEGTLLPDERRQLNKIFLLDFCNSDSIVSPIDKLETQKSSVLKLLHISFRLIESWEYPSQTLTISNSLMVRNSNQISEKLSDLKVGINLLIKGSQDGVLSLDDNDSQQLPPYGNYYQNLGGDGNVRRNYELLACFKKDMHKVETYLTVAKCRKSLEANCTL.

The N-terminal stretch at 1–22 is a signal peptide; that stretch reads MGQVFLLMPVLLVSCFLSQGAA. A Zn(2+)-binding site is contributed by His38. Residues Cys71 and Cys183 are joined by a disulfide bond. Zn(2+) is bound at residue Glu192. Cysteines 200 and 208 form a disulfide.

This sequence belongs to the somatotropin/prolactin family.

It is found in the secreted. In terms of biological role, growth hormone plays an important role in growth control and is involved in the regulation of several anabolic processes. Implicated as an osmoregulatory substance important for seawater adaptation. This Salmo salar (Atlantic salmon) protein is Somatotropin (gh).